Consider the following 590-residue polypeptide: Aspartate--tRNA ligase (590 aa).

Glutamate 172 lines the L-aspartate pocket. The interval 196-199 (QLFK) is aspartate. Arginine 218 serves as a coordination point for L-aspartate. Residues 218–220 (RDE) and glutamine 227 each bind ATP. Histidine 449 is a binding site for L-aspartate. Glutamate 483 lines the ATP pocket. L-aspartate is bound at residue arginine 490. 535–538 (GLDR) serves as a coordination point for ATP.

This sequence belongs to the class-II aminoacyl-tRNA synthetase family. Type 1 subfamily. In terms of assembly, homodimer.

It is found in the cytoplasm. The enzyme catalyses tRNA(Asp) + L-aspartate + ATP = L-aspartyl-tRNA(Asp) + AMP + diphosphate. Its function is as follows. Catalyzes the attachment of L-aspartate to tRNA(Asp) in a two-step reaction: L-aspartate is first activated by ATP to form Asp-AMP and then transferred to the acceptor end of tRNA(Asp). The protein is Aspartate--tRNA ligase of Glaesserella parasuis serovar 5 (strain SH0165) (Haemophilus parasuis).